Consider the following 197-residue polypeptide: ATP-dependent Clp protease proteolytic subunit 2 (197 aa).

S101 (nucleophile) is an active-site residue. The active site involves H126.

This sequence belongs to the peptidase S14 family. As to quaternary structure, fourteen ClpP subunits assemble into 2 heptameric rings which stack back to back to give a disk-like structure with a central cavity, resembling the structure of eukaryotic proteasomes.

The protein resides in the cytoplasm. The catalysed reaction is Hydrolysis of proteins to small peptides in the presence of ATP and magnesium. alpha-casein is the usual test substrate. In the absence of ATP, only oligopeptides shorter than five residues are hydrolyzed (such as succinyl-Leu-Tyr-|-NHMec, and Leu-Tyr-Leu-|-Tyr-Trp, in which cleavage of the -Tyr-|-Leu- and -Tyr-|-Trp bonds also occurs).. Functionally, cleaves peptides in various proteins in a process that requires ATP hydrolysis. Has a chymotrypsin-like activity. Plays a major role in the degradation of misfolded proteins. The protein is ATP-dependent Clp protease proteolytic subunit 2 of Trichormus variabilis (strain ATCC 29413 / PCC 7937) (Anabaena variabilis).